We begin with the raw amino-acid sequence, 220 residues long: Deoxyribose-phosphate aldolase (220 aa).

D89 acts as the Proton donor/acceptor in catalysis. The Schiff-base intermediate with acetaldehyde role is filled by K151. Residue K180 is the Proton donor/acceptor of the active site.

The protein belongs to the DeoC/FbaB aldolase family. DeoC type 1 subfamily.

The protein resides in the cytoplasm. It catalyses the reaction 2-deoxy-D-ribose 5-phosphate = D-glyceraldehyde 3-phosphate + acetaldehyde. Its pathway is carbohydrate degradation; 2-deoxy-D-ribose 1-phosphate degradation; D-glyceraldehyde 3-phosphate and acetaldehyde from 2-deoxy-alpha-D-ribose 1-phosphate: step 2/2. Functionally, catalyzes a reversible aldol reaction between acetaldehyde and D-glyceraldehyde 3-phosphate to generate 2-deoxy-D-ribose 5-phosphate. The chain is Deoxyribose-phosphate aldolase from Lactococcus lactis subsp. cremoris (strain SK11).